The following is a 395-amino-acid chain: S-adenosylmethionine synthase (395 aa).

H18 contacts ATP. D20 is a binding site for Mg(2+). A K(+)-binding site is contributed by E46. 2 residues coordinate L-methionine: E59 and Q103. Residues 103–113 (QSADIAVGVDS) are flexible loop. ATP-binding positions include 170–172 (DAK), D244, 250–251 (RK), A267, and K271. Residue D244 coordinates L-methionine. K275 lines the L-methionine pocket.

The protein belongs to the AdoMet synthase family. As to quaternary structure, homotetramer; dimer of dimers. The cofactor is Mg(2+). Requires K(+) as cofactor.

Its subcellular location is the cytoplasm. It catalyses the reaction L-methionine + ATP + H2O = S-adenosyl-L-methionine + phosphate + diphosphate. The protein operates within amino-acid biosynthesis; S-adenosyl-L-methionine biosynthesis; S-adenosyl-L-methionine from L-methionine: step 1/1. Functionally, catalyzes the formation of S-adenosylmethionine (AdoMet) from methionine and ATP. The overall synthetic reaction is composed of two sequential steps, AdoMet formation and the subsequent tripolyphosphate hydrolysis which occurs prior to release of AdoMet from the enzyme. In Gluconacetobacter diazotrophicus (strain ATCC 49037 / DSM 5601 / CCUG 37298 / CIP 103539 / LMG 7603 / PAl5), this protein is S-adenosylmethionine synthase.